A 330-amino-acid chain; its full sequence is Anthranilate phosphoribosyltransferase (330 aa).

Residues Gly79, 82–83, Thr87, 89–92, 107–115, and Ser119 contribute to the 5-phospho-alpha-D-ribose 1-diphosphate site; these read GD, NIST, and KHGNYGVSS. Anthranilate is bound at residue Gly79. Ser91 contributes to the Mg(2+) binding site. Asn110 is an anthranilate binding site. Arg165 serves as a coordination point for anthranilate. Residues Asp223 and Glu224 each coordinate Mg(2+).

This sequence belongs to the anthranilate phosphoribosyltransferase family. As to quaternary structure, homodimer. Mg(2+) serves as cofactor.

It catalyses the reaction N-(5-phospho-beta-D-ribosyl)anthranilate + diphosphate = 5-phospho-alpha-D-ribose 1-diphosphate + anthranilate. It functions in the pathway amino-acid biosynthesis; L-tryptophan biosynthesis; L-tryptophan from chorismate: step 2/5. In terms of biological role, catalyzes the transfer of the phosphoribosyl group of 5-phosphorylribose-1-pyrophosphate (PRPP) to anthranilate to yield N-(5'-phosphoribosyl)-anthranilate (PRA). This Flavobacterium johnsoniae (strain ATCC 17061 / DSM 2064 / JCM 8514 / BCRC 14874 / CCUG 350202 / NBRC 14942 / NCIMB 11054 / UW101) (Cytophaga johnsonae) protein is Anthranilate phosphoribosyltransferase.